We begin with the raw amino-acid sequence, 144 residues long: Transcriptional regulator SlyA (144 aa).

An HTH marR-type domain is found at 2–135 (ESPLGSDLAR…LNKIISKLEK (134 aa)). Residues 49–72 (QIQLAKAIGIEQPSLVRTLDQLEE) constitute a DNA-binding region (H-T-H motif).

This sequence belongs to the SlyA family. In terms of assembly, homodimer.

Its function is as follows. Transcription regulator that can specifically activate or repress expression of target genes. This chain is Transcriptional regulator SlyA, found in Blochmanniella pennsylvanica (strain BPEN).